Here is a 58-residue protein sequence, read N- to C-terminus: Small ribosomal subunit protein bS21 (58 aa).

Residues 32 to 42 (ARRREHYEKPS) show a composition bias toward basic and acidic residues. Residues 32–58 (ARRREHYEKPSVRRKKKSEAARKRRWH) form a disordered region. The span at 43–58 (VRRKKKSEAARKRRWH) shows a compositional bias: basic residues.

This sequence belongs to the bacterial ribosomal protein bS21 family.

The sequence is that of Small ribosomal subunit protein bS21 from Moorella thermoacetica (strain ATCC 39073 / JCM 9320).